Reading from the N-terminus, the 384-residue chain is S-adenosylmethionine synthase (384 aa).

Position 15 (H15) interacts with ATP. A Mg(2+)-binding site is contributed by D17. Residue E43 participates in K(+) binding. Residues E56 and Q99 each coordinate L-methionine. A flexible loop region spans residues 99-109; it reads QSPDINQGVDR. Residues 164–166, 230–231, D239, 245–246, A262, and K266 contribute to the ATP site; these read DAK, RF, and RK. D239 is an L-methionine binding site. Residue K270 participates in L-methionine binding.

This sequence belongs to the AdoMet synthase family. In terms of assembly, homotetramer; dimer of dimers. Mg(2+) serves as cofactor. K(+) is required as a cofactor.

Its subcellular location is the cytoplasm. The enzyme catalyses L-methionine + ATP + H2O = S-adenosyl-L-methionine + phosphate + diphosphate. Its pathway is amino-acid biosynthesis; S-adenosyl-L-methionine biosynthesis; S-adenosyl-L-methionine from L-methionine: step 1/1. Functionally, catalyzes the formation of S-adenosylmethionine (AdoMet) from methionine and ATP. The overall synthetic reaction is composed of two sequential steps, AdoMet formation and the subsequent tripolyphosphate hydrolysis which occurs prior to release of AdoMet from the enzyme. The chain is S-adenosylmethionine synthase from Yersinia enterocolitica serotype O:8 / biotype 1B (strain NCTC 13174 / 8081).